The primary structure comprises 200 residues: Holliday junction resolvase RecU (200 aa).

The segment at 1 to 27 (MALKYPSGKEYRGNKPNAARRPAADYA) is disordered. Residues threonine 84, aspartate 86, glutamate 99, and glutamine 118 each coordinate Mg(2+).

This sequence belongs to the RecU family. Homodimer. It depends on Mg(2+) as a cofactor.

It localises to the cytoplasm. It carries out the reaction Endonucleolytic cleavage at a junction such as a reciprocal single-stranded crossover between two homologous DNA duplexes (Holliday junction).. In terms of biological role, endonuclease that resolves Holliday junction intermediates in genetic recombination. Cleaves mobile four-strand junctions by introducing symmetrical nicks in paired strands. Promotes annealing of linear ssDNA with homologous dsDNA. Required for DNA repair, homologous recombination and chromosome segregation. The chain is Holliday junction resolvase RecU from Geobacillus kaustophilus (strain HTA426).